Reading from the N-terminus, the 305-residue chain is Homoserine O-acetyltransferase (305 aa).

Catalysis depends on cysteine 142, which acts as the Acyl-thioester intermediate. Lysine 163 and serine 192 together coordinate substrate. The active-site Proton acceptor is the histidine 235. The active site involves glutamate 237. Substrate is bound at residue arginine 249.

This sequence belongs to the MetA family.

The protein resides in the cytoplasm. It catalyses the reaction L-homoserine + acetyl-CoA = O-acetyl-L-homoserine + CoA. It participates in amino-acid biosynthesis; L-methionine biosynthesis via de novo pathway; O-acetyl-L-homoserine from L-homoserine: step 1/1. Transfers an acetyl group from acetyl-CoA to L-homoserine, forming acetyl-L-homoserine. This Bacteroides fragilis (strain ATCC 25285 / DSM 2151 / CCUG 4856 / JCM 11019 / LMG 10263 / NCTC 9343 / Onslow / VPI 2553 / EN-2) protein is Homoserine O-acetyltransferase.